Reading from the N-terminus, the 29-residue chain is Brevinin-2Ee (29 aa).

A disulfide bridge links cysteine 23 with cysteine 29.

The protein belongs to the frog skin active peptide (FSAP) family. Brevinin subfamily. As to expression, expressed by the skin glands.

Its subcellular location is the secreted. Functionally, shows antibacterial activity against representative Gram-negative and Gram-positive bacterial species, and hemolytic activity. The polypeptide is Brevinin-2Ee (Pelophylax lessonae (Pool frog)).